The primary structure comprises 261 residues: Chanoclavine-I dehydrogenase easD (261 aa).

An N-terminal signal peptide occupies residues 1 to 20; the sequence is MPSMTSKVFAITGGASGIGA. Residue isoleucine 18 coordinates NADP(+). N-linked (GlcNAc...) asparagine glycosylation is present at asparagine 43. NADP(+) is bound by residues aspartate 66, arginine 132, tyrosine 166, lysine 170, and threonine 201. Residue tyrosine 166 is the Proton donor of the active site. Lysine 170 (lowers pKa of active site Tyr) is an active-site residue.

It belongs to the short-chain dehydrogenases/reductases (SDR) family. As to quaternary structure, homotetramer.

The enzyme catalyses chanoclavine-I + NAD(+) = chanoclavine-I aldehyde + NADH + H(+). The protein operates within alkaloid biosynthesis; ergot alkaloid biosynthesis. Its function is as follows. Chanoclavine-I dehydrogenase; part of the gene cluster that mediates the biosynthesis of fungal ergot alkaloid. DmaW catalyzes the first step of ergot alkaloid biosynthesis by condensing dimethylallyl diphosphate (DMAP) and tryptophan to form 4-dimethylallyl-L-tryptophan. The second step is catalyzed by the methyltransferase easF that methylates 4-dimethylallyl-L-tryptophan in the presence of S-adenosyl-L-methionine, resulting in the formation of 4-dimethylallyl-L-abrine. The catalase easC and the FAD-dependent oxidoreductase easE then transform 4-dimethylallyl-L-abrine to chanoclavine-I which is further oxidized by easD in the presence of NAD(+), resulting in the formation of chanoclavine-I aldehyde. Agroclavine dehydrogenase easG then mediates the conversion of chanoclavine-I aldehyde to agroclavine via a non-enzymatic adduct reaction: the substrate is an iminium intermediate that is formed spontaneously from chanoclavine-I aldehyde in the presence of glutathione. The presence of easA is not required to complete this reaction. Further conversion of agroclavine to paspalic acid is a two-step process involving oxidation of agroclavine to elymoclavine and of elymoclavine to paspalic acid, the second step being performed by the elymoclavine oxidase cloA. Paspalic acid is then further converted to D-lysergic acid. Ergopeptines are assembled from D-lysergic acid and three different amino acids by the D-lysergyl-peptide-synthetases composed each of a monomudular and a trimodular nonribosomal peptide synthetase subunit. LpsB and lpsC encode the monomodular subunits responsible for D-lysergic acid activation and incorporation into the ergopeptine backbone. LpsA1 and A2 subunits encode the trimodular nonribosomal peptide synthetase assembling the tripeptide portion of ergopeptines. LpsA1 is responsible for formation of the major ergopeptine, ergotamine, and lpsA2 for alpha-ergocryptine, the minor ergopeptine of the total alkaloid mixture elaborated by C.purpurea. D-lysergyl-tripeptides are assembled by the nonribosomal peptide synthetases and released as N-(D-lysergyl-aminoacyl)-lactams. Cyclolization of the D-lysergyl-tripeptides is performed by the Fe(2+)/2-ketoglutarate-dependent dioxygenase easH which introduces a hydroxyl group into N-(D-lysergyl-aminoacyl)-lactam at alpha-C of the aminoacyl residue followed by spontaneous condensation with the terminal lactam carbonyl group. This Claviceps purpurea (Ergot fungus) protein is Chanoclavine-I dehydrogenase easD.